Here is a 510-residue protein sequence, read N- to C-terminus: NAD(P)H-quinone oxidoreductase subunit 2, chloroplastic (510 aa).

12 consecutive transmembrane segments (helical) span residues 24-44, 59-79, 99-119, 124-144, 149-169, 183-203, 229-249, 295-315, 323-343, 347-367, 395-415, and 418-438; these read LLLF…GLIL, WFYF…LFRW, IFQF…VEYI, MAIT…MFLC, LITI…LSGY, YLLM…WLYG, ISIA…PAPF, WHLL…LIAI, MLAY…IVGD, GYAS…GTFA, ALSS…AGFF, and LHLF…IGLL.

The protein belongs to the complex I subunit 2 family. In terms of assembly, NDH is composed of at least 16 different subunits, 5 of which are encoded in the nucleus.

It is found in the plastid. The protein resides in the chloroplast thylakoid membrane. The enzyme catalyses a plastoquinone + NADH + (n+1) H(+)(in) = a plastoquinol + NAD(+) + n H(+)(out). It carries out the reaction a plastoquinone + NADPH + (n+1) H(+)(in) = a plastoquinol + NADP(+) + n H(+)(out). In terms of biological role, NDH shuttles electrons from NAD(P)H:plastoquinone, via FMN and iron-sulfur (Fe-S) centers, to quinones in the photosynthetic chain and possibly in a chloroplast respiratory chain. The immediate electron acceptor for the enzyme in this species is believed to be plastoquinone. Couples the redox reaction to proton translocation, and thus conserves the redox energy in a proton gradient. This is NAD(P)H-quinone oxidoreductase subunit 2, chloroplastic from Yucca glauca (Soapweed yucca).